A 1088-amino-acid polypeptide reads, in one-letter code: RNA-directed RNA polymerase (1088 aa).

The 187-residue stretch at 501-687 (LSYGDVTRFL…AKRYIAGGKI (187 aa)) folds into the RdRp catalytic domain.

It belongs to the reoviridae RNA-directed RNA polymerase family. In terms of assembly, interacts with VP3 (Potential). Interacts with VP2; this interaction activates VP1. Interacts with NSP5; this interaction is probably necessary for the formation of functional virus factories. Interacts with NSP2; this interaction is weak. Mg(2+) is required as a cofactor.

Its subcellular location is the virion. The catalysed reaction is RNA(n) + a ribonucleoside 5'-triphosphate = RNA(n+1) + diphosphate. RNA-directed RNA polymerase that is involved in both transcription and genome replication. Together with VP3 capping enzyme, forms an enzyme complex positioned near the channels situated at each of the five-fold vertices of the core. Following infection, the outermost layer of the virus is lost, leaving a double-layered particle (DLP) made up of the core and VP6 shell. VP1 then catalyzes the transcription of fully conservative plus-strand genomic RNAs that are extruded through the DLP's channels into the cytoplasm where they function as mRNAs for translation of viral proteins. One copy of each of the viral (+)RNAs is also recruited during core assembly, together with newly synthesized polymerase complexes and VP2. The polymerase of these novo-formed particles catalyzes the synthesis of complementary minus-strands leading to dsRNA formation. To do so, the polymerase specifically recognizes and binds 4 bases 5'-UGUG-3' in the conserved 3'-sequence of plus-strand RNA templates. VP2 presumably activates the autoinhibited VP1-RNA complex to coordinate packaging and genome replication. Once dsRNA synthesis is complete, the polymerase switches to the transcriptional mode, thus providing secondary transcription. In Rotavirus A (strain RVA/Human/United States/Wa/1974/G1P1A[8]) (RV-A), this protein is RNA-directed RNA polymerase.